We begin with the raw amino-acid sequence, 363 residues long: MDKRANSRKPFLFYNEDYYCEKPKRYFHTNKVIFEKLDSYATNINRCRELLTDFFDYCLPKYYRRKNKFTLLFRLLEPVIKQAGASALTTVSNDQCRWLEINQFSGWEQRDNQYAHKWLIKVVGADMGQQILFIIKQVTKKFKTCNLGFHNYYKLFRRCLSILLFKHKEVFVQCLQVILKAAMPVKKKGVVKSNYAFAVTNALHYYIVDNPHLLCKDINVAIKVRRLLIKHEMLPTEKQIKLSFEKCSKGIEVPLYEKLLLNHMMRINDDNLQWPSLINNKKIMEWNANRCFDESNKILHVYIGQYYTSSCRRVKKSFFKYNGWNRQGRFCRTEKFCHLVNLQLNKDGSKKLKRVQRKLINCK.

This chain is 43 kDa protein (P43), found in Lepidoptera (butterflies and moths).